Consider the following 76-residue polypeptide: Acyl carrier protein (76 aa).

Residues 1-76 (MALLDDVKAV…DAIKYIENNA (76 aa)) form the Carrier domain. Residue serine 36 is modified to O-(pantetheine 4'-phosphoryl)serine.

This sequence belongs to the acyl carrier protein (ACP) family. 4'-phosphopantetheine is transferred from CoA to a specific serine of apo-ACP by AcpS. This modification is essential for activity because fatty acids are bound in thioester linkage to the sulfhydryl of the prosthetic group.

The protein localises to the cytoplasm. It participates in lipid metabolism; fatty acid biosynthesis. Carrier of the growing fatty acid chain in fatty acid biosynthesis. The sequence is that of Acyl carrier protein from Aliarcobacter butzleri (strain RM4018) (Arcobacter butzleri).